The sequence spans 504 residues: Cytochrome P450 6B6 (504 aa).

Cys-445 contacts heme.

This sequence belongs to the cytochrome P450 family. Heme serves as cofactor.

The protein localises to the endoplasmic reticulum membrane. Its subcellular location is the microsome membrane. It catalyses the reaction an organic molecule + reduced [NADPH--hemoprotein reductase] + O2 = an alcohol + oxidized [NADPH--hemoprotein reductase] + H2O + H(+). The sequence is that of Cytochrome P450 6B6 (CYP6B6) from Helicoverpa armigera (Cotton bollworm).